A 501-amino-acid polypeptide reads, in one-letter code: Na(+)/H(+) antiporter NhaB (501 aa).

A run of 11 helical transmembrane segments spans residues 24–44 (VILL…PGVA), 46–66 (WLLI…YPLL), 90–110 (VLTN…IYFM), 145–165 (FLDA…FFSV), 206–226 (LLMH…VGEP), 239–259 (FAGF…AGLA), 302–319 (ALWI…GLAF), 351–371 (FQES…VAVI), 395–415 (MFFI…VATV), 450–470 (VATP…IAPL), and 478–498 (MVIM…YMVT).

Belongs to the NhaB Na(+)/H(+) (TC 2.A.34) antiporter family.

The protein localises to the cell inner membrane. It catalyses the reaction 2 Na(+)(in) + 3 H(+)(out) = 2 Na(+)(out) + 3 H(+)(in). Na(+)/H(+) antiporter that extrudes sodium in exchange for external protons. The chain is Na(+)/H(+) antiporter NhaB from Marinobacter nauticus (strain ATCC 700491 / DSM 11845 / VT8) (Marinobacter aquaeolei).